Reading from the N-terminus, the 85-residue chain is Large ribosomal subunit protein bL27 (85 aa).

It belongs to the bacterial ribosomal protein bL27 family.

This Persephonella marina (strain DSM 14350 / EX-H1) protein is Large ribosomal subunit protein bL27.